We begin with the raw amino-acid sequence, 177 residues long: Inorganic pyrophosphatase (177 aa).

Substrate is bound by residues Lys31, Arg45, and Tyr57. Positions 67, 72, and 104 each coordinate Mg(2+). Residue Tyr142 participates in substrate binding.

Belongs to the PPase family. Homohexamer. It depends on Mg(2+) as a cofactor.

Its subcellular location is the cytoplasm. The enzyme catalyses diphosphate + H2O = 2 phosphate + H(+). Its function is as follows. Catalyzes the hydrolysis of inorganic pyrophosphate (PPi) forming two phosphate ions. This chain is Inorganic pyrophosphatase, found in Neisseria meningitidis serogroup B (strain ATCC BAA-335 / MC58).